The primary structure comprises 213 residues: Thymidylate kinase (213 aa).

10–17 (GLEGAGKT) contacts ATP.

The protein belongs to the thymidylate kinase family.

It carries out the reaction dTMP + ATP = dTDP + ADP. Phosphorylation of dTMP to form dTDP in both de novo and salvage pathways of dTTP synthesis. The chain is Thymidylate kinase from Escherichia coli O6:K15:H31 (strain 536 / UPEC).